The chain runs to 103 residues: Pyrimidine/purine nucleoside phosphorylase (103 aa).

It belongs to the nucleoside phosphorylase PpnP family.

The enzyme catalyses a purine D-ribonucleoside + phosphate = a purine nucleobase + alpha-D-ribose 1-phosphate. It catalyses the reaction adenosine + phosphate = alpha-D-ribose 1-phosphate + adenine. The catalysed reaction is cytidine + phosphate = cytosine + alpha-D-ribose 1-phosphate. It carries out the reaction guanosine + phosphate = alpha-D-ribose 1-phosphate + guanine. The enzyme catalyses inosine + phosphate = alpha-D-ribose 1-phosphate + hypoxanthine. It catalyses the reaction thymidine + phosphate = 2-deoxy-alpha-D-ribose 1-phosphate + thymine. The catalysed reaction is uridine + phosphate = alpha-D-ribose 1-phosphate + uracil. It carries out the reaction xanthosine + phosphate = alpha-D-ribose 1-phosphate + xanthine. Catalyzes the phosphorolysis of diverse nucleosides, yielding D-ribose 1-phosphate and the respective free bases. Can use uridine, adenosine, guanosine, cytidine, thymidine, inosine and xanthosine as substrates. Also catalyzes the reverse reactions. The chain is Pyrimidine/purine nucleoside phosphorylase from Laribacter hongkongensis (strain HLHK9).